The primary structure comprises 147 residues: MIFAVRTMVGQEKNIAGLMASRAEKEQLDVYSILASESLKGYVLVEAETKGDVEELIKGMPRVRGIVPGTIAIEEIEPLLTPKKIIENIEKGDVVEIIAGPFKGERAKVIRVDKHKEEVTLELENAAVPIPITLPVEGVKIVSKHKD.

Positions 91 to 122 (KGDVVEIIAGPFKGERAKVIRVDKHKEEVTLE) constitute a KOW domain.

Belongs to the archaeal Spt5 family. Heterodimer composed of Spt4 and Spt5. Interacts with RNA polymerase (RNAP). Forms a homodimer in solution.

Stimulates transcription elongation. The sequence is that of Transcription elongation factor Spt5 from Methanocaldococcus jannaschii (strain ATCC 43067 / DSM 2661 / JAL-1 / JCM 10045 / NBRC 100440) (Methanococcus jannaschii).